The following is a 427-amino-acid chain: Enolase (427 aa).

Glutamine 163 contacts (2R)-2-phosphoglycerate. Glutamate 205 acts as the Proton donor in catalysis. Aspartate 242, glutamate 285, and aspartate 312 together coordinate Mg(2+). (2R)-2-phosphoglycerate is bound by residues lysine 337, arginine 366, serine 367, and lysine 388. Lysine 337 acts as the Proton acceptor in catalysis.

The protein belongs to the enolase family. Requires Mg(2+) as cofactor.

It is found in the cytoplasm. Its subcellular location is the secreted. It localises to the cell surface. The catalysed reaction is (2R)-2-phosphoglycerate = phosphoenolpyruvate + H2O. It functions in the pathway carbohydrate degradation; glycolysis; pyruvate from D-glyceraldehyde 3-phosphate: step 4/5. Its function is as follows. Catalyzes the reversible conversion of 2-phosphoglycerate (2-PG) into phosphoenolpyruvate (PEP). It is essential for the degradation of carbohydrates via glycolysis. The polypeptide is Enolase (Beijerinckia indica subsp. indica (strain ATCC 9039 / DSM 1715 / NCIMB 8712)).